The following is a 341-amino-acid chain: GTP 3',8-cyclase (341 aa).

The Radical SAM core domain maps to 11–231 (QKSRPLRDLR…RIINEDMPIE (221 aa)). GTP is bound at residue Arg-20. The [4Fe-4S] cluster site is built by Cys-27 and Cys-31. Tyr-33 lines the S-adenosyl-L-methionine pocket. [4Fe-4S] cluster is bound at residue Cys-34. A GTP-binding site is contributed by Arg-75. Gly-79 lines the S-adenosyl-L-methionine pocket. Position 106 (Thr-106) interacts with GTP. Ser-130 is an S-adenosyl-L-methionine binding site. Lys-167 provides a ligand contact to GTP. An S-adenosyl-L-methionine-binding site is contributed by Met-201. Residues Cys-265 and Cys-268 each coordinate [4Fe-4S] cluster. 270 to 272 (RAR) contacts GTP. Cys-282 provides a ligand contact to [4Fe-4S] cluster.

Belongs to the radical SAM superfamily. MoaA family. In terms of assembly, monomer and homodimer. Requires [4Fe-4S] cluster as cofactor.

The enzyme catalyses GTP + AH2 + S-adenosyl-L-methionine = (8S)-3',8-cyclo-7,8-dihydroguanosine 5'-triphosphate + 5'-deoxyadenosine + L-methionine + A + H(+). The protein operates within cofactor biosynthesis; molybdopterin biosynthesis. Catalyzes the cyclization of GTP to (8S)-3',8-cyclo-7,8-dihydroguanosine 5'-triphosphate. The protein is GTP 3',8-cyclase of Bacillus licheniformis (strain ATCC 14580 / DSM 13 / JCM 2505 / CCUG 7422 / NBRC 12200 / NCIMB 9375 / NCTC 10341 / NRRL NRS-1264 / Gibson 46).